The sequence spans 166 residues: MTREEKSIAIGDLTEKLAGTNILYVADISGLNAETTSNLRRACFKAGIKLEVVKNTLLVKAMEASDKDFGDLPLTLKGNTSIFFADVANGPAKIIKDFRKKSDKPLLKGAFINDEIYIGDNLLDSLVNLKSRDEVIGEIIGLLQSPAKRVIAALLNNAESKGEVAE.

This sequence belongs to the universal ribosomal protein uL10 family. As to quaternary structure, part of the ribosomal stalk of the 50S ribosomal subunit. The N-terminus interacts with L11 and the large rRNA to form the base of the stalk. The C-terminus forms an elongated spine to which L12 dimers bind in a sequential fashion forming a multimeric L10(L12)X complex.

In terms of biological role, forms part of the ribosomal stalk, playing a central role in the interaction of the ribosome with GTP-bound translation factors. This chain is Large ribosomal subunit protein uL10, found in Flavobacterium psychrophilum (strain ATCC 49511 / DSM 21280 / CIP 103535 / JIP02/86).